The following is a 340-amino-acid chain: uncharacterized protein (340 aa).

Residues 284–340 (DHSTPTNYQQETPASQQQLDQENEPIKPSKKSNSSSLPRGTTQPKSNSINRVSKLID) form a disordered region. Polar residues-rich tracts occupy residues 286–303 (STPT…QQLD) and 320–334 (LPRG…SINR).

This is an uncharacterized protein from Mycoplasma genitalium (strain ATCC 33530 / DSM 19775 / NCTC 10195 / G37) (Mycoplasmoides genitalium).